The sequence spans 373 residues: tRNA (guanine(26)-N(2))-dimethyltransferase (373 aa).

One can recognise a Trm1 methyltransferase domain in the interval 2–365; sequence KIISEGETKL…AELSDLVVLI (364 aa). 5 residues coordinate S-adenosyl-L-methionine: arginine 35, arginine 66, aspartate 86, aspartate 113, and alanine 114.

The protein belongs to the class I-like SAM-binding methyltransferase superfamily. Trm1 family.

The catalysed reaction is guanosine(26) in tRNA + 2 S-adenosyl-L-methionine = N(2)-dimethylguanosine(26) in tRNA + 2 S-adenosyl-L-homocysteine + 2 H(+). In terms of biological role, dimethylates a single guanine residue at position 26 of a number of tRNAs using S-adenosyl-L-methionine as donor of the methyl groups. In Methanococcus maripaludis (strain C5 / ATCC BAA-1333), this protein is tRNA (guanine(26)-N(2))-dimethyltransferase.